The primary structure comprises 476 residues: Ankyrin repeat, SAM and basic leucine zipper domain-containing protein 1 (476 aa).

Phosphoserine is present on residues Ser18 and Ser21. ANK repeat units follow at residues Glu46 to Ser75, Tyr79 to Phe108, Asp111 to Val145, Arg149 to Thr178, Asn182 to Leu211, and Asp215 to Gly244. One can recognise an SAM domain in the interval Ser273 to Glu335.

In terms of assembly, interacts with DDX4, PIWIL1, RANBP9 and TDRD1.

The protein resides in the cytoplasm. Its function is as follows. Plays a central role during spermatogenesis by repressing transposable elements and preventing their mobilization, which is essential for the germline integrity. Acts via the piRNA metabolic process, which mediates the repression of transposable elements during meiosis by forming complexes composed of piRNAs and Piwi proteins and governs the methylation and subsequent repression of transposons. Its association with pi-bodies suggests a participation in the primary piRNAs metabolic process. Required prior to the pachytene stage to facilitate the production of multiple types of piRNAs, including those associated with repeats involved in the regulation of retrotransposons. May act by mediating protein-protein interactions during germ cell maturation. In Dasypus novemcinctus (Nine-banded armadillo), this protein is Ankyrin repeat, SAM and basic leucine zipper domain-containing protein 1 (ASZ1).